A 350-amino-acid chain; its full sequence is Probable dual-specificity RNA methyltransferase RlmN (350 aa).

Glu91 (proton acceptor) is an active-site residue. In terms of domain architecture, Radical SAM core spans 97–327; sequence YHHGNSVCIS…VTIRREMGRD (231 aa). A disulfide bridge connects residues Cys104 and Cys332. Cys111, Cys115, and Cys118 together coordinate [4Fe-4S] cluster. S-adenosyl-L-methionine contacts are provided by residues 158 to 159, Ser190, 213 to 215, and Asn289; these read GE and SLH. Cys332 functions as the S-methylcysteine intermediate in the catalytic mechanism.

It belongs to the radical SAM superfamily. RlmN family. [4Fe-4S] cluster serves as cofactor.

The protein resides in the cytoplasm. It carries out the reaction adenosine(2503) in 23S rRNA + 2 reduced [2Fe-2S]-[ferredoxin] + 2 S-adenosyl-L-methionine = 2-methyladenosine(2503) in 23S rRNA + 5'-deoxyadenosine + L-methionine + 2 oxidized [2Fe-2S]-[ferredoxin] + S-adenosyl-L-homocysteine. It catalyses the reaction adenosine(37) in tRNA + 2 reduced [2Fe-2S]-[ferredoxin] + 2 S-adenosyl-L-methionine = 2-methyladenosine(37) in tRNA + 5'-deoxyadenosine + L-methionine + 2 oxidized [2Fe-2S]-[ferredoxin] + S-adenosyl-L-homocysteine. Its function is as follows. Specifically methylates position 2 of adenine 2503 in 23S rRNA and position 2 of adenine 37 in tRNAs. This chain is Probable dual-specificity RNA methyltransferase RlmN, found in Lachnospira eligens (strain ATCC 27750 / DSM 3376 / VPI C15-48 / C15-B4) (Eubacterium eligens).